A 136-amino-acid chain; its full sequence is Large ribosomal subunit protein uL16 (136 aa).

Belongs to the universal ribosomal protein uL16 family. Part of the 50S ribosomal subunit.

Its function is as follows. Binds 23S rRNA and is also seen to make contacts with the A and possibly P site tRNAs. In Wigglesworthia glossinidia brevipalpis, this protein is Large ribosomal subunit protein uL16.